We begin with the raw amino-acid sequence, 142 residues long: Large ribosomal subunit protein uL11 (142 aa).

It belongs to the universal ribosomal protein uL11 family. As to quaternary structure, part of the ribosomal stalk of the 50S ribosomal subunit. Interacts with L10 and the large rRNA to form the base of the stalk. L10 forms an elongated spine to which L12 dimers bind in a sequential fashion forming a multimeric L10(L12)X complex. In terms of processing, one or more lysine residues are methylated.

Its function is as follows. Forms part of the ribosomal stalk which helps the ribosome interact with GTP-bound translation factors. The polypeptide is Large ribosomal subunit protein uL11 (Acinetobacter baumannii (strain AB307-0294)).